We begin with the raw amino-acid sequence, 525 residues long: BTB/POZ domain-containing protein 2 (525 aa).

The tract at residues 1 to 86 is disordered; that stretch reads MAAGGSGGRA…AEEAAGPGAA (86 aa). The segment covering 16 to 26 has biased composition (gly residues); it reads VGVGPGTGGSP. Low complexity predominate over residues 27 to 55; the sequence is GPSANAAATPAPGNAAAAAAAAAAAAAAP. The span at 56-65 shows a compositional bias: pro residues; it reads GPTPPAPPGP. Over residues 66 to 86 the composition is skewed to low complexity; the sequence is GTDAQAAGAERAEEAAGPGAA. Positions 117–187 constitute a BTB domain; that stretch reads CDVHFLVGKG…LYSDEVQIGP (71 aa).

Interacts with topoisomerase 1 and with TRIM5 isoform Delta.

Its subcellular location is the cytoplasm. The protein is BTB/POZ domain-containing protein 2 (BTBD2) of Homo sapiens (Human).